The chain runs to 291 residues: Lipase (291 aa).

The N-terminal stretch at methionine 1 to alanine 17 is a signal peptide. A propeptide spanning residues serine 18–arginine 22 is cleaved from the precursor. 3 disulfides stabilise this stretch: cysteine 44-cysteine 290, cysteine 58-cysteine 63, and cysteine 126-cysteine 129. Residue serine 168 is the Nucleophile of the active site. Catalysis depends on charge relay system residues aspartate 223 and histidine 280.

Belongs to the AB hydrolase superfamily. Lipase family.

It carries out the reaction a triacylglycerol + H2O = a diacylglycerol + a fatty acid + H(+). The chain is Lipase (LIP) from Thermomyces lanuginosus (Humicola lanuginosa).